A 498-amino-acid chain; its full sequence is uncharacterized protein (498 aa).

329 to 336 contributes to the ATP binding site; it reads GNPGTGKS.

Its subcellular location is the secreted. It localises to the cell wall. This is an uncharacterized protein from Mycobacterium tuberculosis (strain CDC 1551 / Oshkosh).